Here is a 208-residue protein sequence, read N- to C-terminus: N-(5'-phosphoribosyl)anthranilate isomerase (208 aa).

The protein belongs to the TrpF family.

It carries out the reaction N-(5-phospho-beta-D-ribosyl)anthranilate = 1-(2-carboxyphenylamino)-1-deoxy-D-ribulose 5-phosphate. It functions in the pathway amino-acid biosynthesis; L-tryptophan biosynthesis; L-tryptophan from chorismate: step 3/5. The sequence is that of N-(5'-phosphoribosyl)anthranilate isomerase from Methanococcus maripaludis (strain C5 / ATCC BAA-1333).